The primary structure comprises 1192 residues: MASQVLVYPPYVYQTQSSAFCSVKKLKVEPSGCVFQERTYPQIHVNGRNFGNSHPSTKGSAFQTKIPFTKPRGHSFSLQAGAIVVKDTAGATKVLAAQAQQAGVEAPRAVVWRNRLHFLEGPQRCGLKRKSEELENHSGAMQIVDELSILPAMLQTNMGNPVTVVTATTGSKQNCTSGEGDYQLVQHEVLCSMKNTYEVLDFLGRGTFGQVVKCWKRGTNEIVAIKILKNHPSYARQGQIEVSILARLSTENADEYNFVRAYECFQHRNHTCLVFEMLEQNLYDFLKQNKFSPLPLKVIRPVLQQVATALKKLKSLGLIHADLKPENIMLVDPVRQPYRVKVIDFGSASHVSKTVCSTYLQSRYYRAPEIILGLPFCEAIDMWSLGCVIAELFLGWPLYPGALEYDQIRYISQTQGLPGEQLLNVGTKSTRFFCRETDMSHSGWRLKTLEEHEAETGMKSKEARKYIFNSLDDIVHVNTVMDLEGGDLLAEKADRREFVNLLKKMLLIDADLRITPIETLNHPFVNMKHLLDFPHSNHVKSCFHIMDICKSPSSCETNNHSKMSLLRPVASNGTAALAANFTKVGTLRSQALTTSAHSVVHHGIPLQAGTAQFGCGDAFHQTLIICPPAIQGIPAAHGKPTSYSIRVDNTVPLVTQAPAVQPLQIRPGVLSQQTWSGRTQQMLIPAWQQVTPMAPAAATLTSEGMAGSQRLGDWGKMIPHSNHYNSVMPPPLLTNQITLSAPQPISVGIAHVVWPQPATTKKNKLCQNRSNSLQNTNIPHSAFISPKIISGKEVEEVSCVDTQDNHTSEGEAGTCREASVRQDSSVSDKQRQTIIIADSPSPAVSVITISSDSDDEETSPRPSLRECKGSLDCEACQSTLNIDRMCSLSSPDSTLSTSSSGQSSPSPCKRPNSMSDDEQESGCETVDGSPTSDSSGHDSPFAENSFVEDAHQNTELGTCAGPEAKPAVGTAVEPPVGRESGLSVDEHMANTDSTCQPLRKGQPAPGKLHQPPALGARQQKPAAAFPQQHLNLSQVQHFGTGHQEWNGNFGHRRQQAYIPTSVTSNPFTLSHGSPNHTAVHAHLAGSTHLGGQPTLLPYPSSASLSSAAPVAHLLASPCTSRPMLQHPTYNISHPSGIVHQVPVGINPRLLPSPTIHQTQYKPIFPPHSYIAASPAYTGFPLSPTKLSQYPYM.

Residue lysine 27 forms a Glycyl lysine isopeptide (Lys-Gly) (interchain with G-Cter in SUMO); alternate linkage. Lysine 27 is covalently cross-linked (Glycyl lysine isopeptide (Lys-Gly) (interchain with G-Cter in SUMO2); alternate). One can recognise a Protein kinase domain in the interval 197 to 525 (YEVLDFLGRG…PIETLNHPFV (329 aa)). Residues 203-211 (LGRGTFGQV) and lysine 226 contribute to the ATP site. Aspartate 322 serves as the catalytic Proton acceptor. Tyrosine 359 carries the post-translational modification Phosphotyrosine. Positions 767–921 (QNRSNSLQNT…NSMSDDEQES (155 aa)) are interaction with AR. Residues 775–868 (NTNIPHSAFI…SPRPSLRECK (94 aa)) form an interaction with FAS region. The interval 799-829 (CVDTQDNHTSEGEAGTCREASVRQDSSVSDK) is disordered. Residues 832–988 (QTIIIADSPS…ESGLSVDEHM (157 aa)) are required for localization to nuclear speckles. Positions 843 to 895 (AVSVITISSDSDDEETSPRPSLRECKGSLDCEACQSTLNIDRMCSLSSPDSTL) are SUMO interaction motifs (SIM); required for nuclear localization and kinase activity. An interaction with UBL1 region spans residues 847–857 (ITISSDSDDEE). Low complexity predominate over residues 889–906 (SSPDSTLSTSSSGQSSPS). Disordered regions lie at residues 889-943 (SSPD…PFAE) and 956-1023 (LGTC…KPAA). Residue lysine 1185 forms a Glycyl lysine isopeptide (Lys-Gly) (interchain with G-Cter in SUMO) linkage.

It belongs to the protein kinase superfamily. CMGC Ser/Thr protein kinase family. HIPK subfamily. In terms of assembly, interacts with UBL1/SUMO-1. Interacts with and stabilizes ligand-bound androgen receptor (AR). Interacts with Nkx1-2. Interacts with FAS and DAXX. Probably part of a complex consisting of HIPK3, FAS and FADD. Binds to NR5A1/SF1, SPEN/MINT and RUNX2. In terms of processing, autophosphorylated, but autophosphorylation is not required for catalytic activity. May be sumoylated. In terms of tissue distribution, heart, skeletal muscle, spleen, testis and lung.

Its subcellular location is the cytoplasm. The protein localises to the nucleus. It carries out the reaction L-seryl-[protein] + ATP = O-phospho-L-seryl-[protein] + ADP + H(+). The catalysed reaction is L-threonyl-[protein] + ATP = O-phospho-L-threonyl-[protein] + ADP + H(+). Its function is as follows. Serine/threonine-protein kinase involved in transcription regulation, apoptosis and steroidogenic gene expression. Phosphorylates JUN and RUNX2. Seems to negatively regulate apoptosis by promoting FADD phosphorylation. Enhances androgen receptor-mediated transcription. May act as a transcriptional corepressor for NK homeodomain transcription factors. The phosphorylation of NR5A1 activates SF1 leading to increased steroidogenic gene expression upon cAMP signaling pathway stimulation. In osteoblasts, supports transcription activation: phosphorylates RUNX2 that synergizes with SPEN/MINT to enhance FGFR2-mediated activation of the osteocalcin FGF-responsive element (OCFRE). This Mus musculus (Mouse) protein is Homeodomain-interacting protein kinase 3 (Hipk3).